We begin with the raw amino-acid sequence, 523 residues long: Maintenance of mitochondrial morphology protein 1 (523 aa).

At 1–43 (MAGSTSASLQTPYFPSSTQINPVRVDHTLPLPPSQPSLSFTQG) the chain is on the lumenal side. The chain crosses the membrane as a helical span at residues 44–64 (LLVGQLSVVLLIGAFIKFFIF). Over 65–523 (GEAPPPPSRG…GSMPDTVTET (459 aa)) the chain is Cytoplasmic. Disordered regions lie at residues 70–118 (PPSR…SSST), 128–147 (YYSATPTHPTPKHGRPRLYH), 295–349 (TSDQ…SKHG), 420–474 (RTGL…DRGL), and 492–523 (GGHQNQSGRDGGRGGNEQFAMPGSMPDTVTET). 2 stretches are compositionally biased toward polar residues: residues 74–96 (GLSNRTSTHPRSYSINAASTDSS) and 105–118 (STSNILRPVPSSST). The span at 137 to 147 (TPKHGRPRLYH) shows a compositional bias: basic residues. One can recognise an SMP-LTD domain in the interval 151–412 (QPESLDWFNV…EPRVQVVGLP (262 aa)). Residues 295–312 (TSDQTMSPIPTPHDTTSE) are compositionally biased toward polar residues. Over residues 449-468 (GVSGGGGSGGGSGGGGGGMR) the composition is skewed to gly residues.

Belongs to the MMM1 family. Homodimer. Component of the ER-mitochondria encounter structure (ERMES) or MDM complex, composed of MMM1, MDM10, MDM12 and MDM34. An MMM1 homodimer associates with one molecule of MDM12 on each side in a pairwise head-to-tail manner, and the SMP-LTD domains of MMM1 and MDM12 generate a continuous hydrophobic tunnel for phospholipid trafficking.

The protein resides in the endoplasmic reticulum membrane. Its function is as follows. Component of the ERMES/MDM complex, which serves as a molecular tether to connect the endoplasmic reticulum (ER) and mitochondria. Components of this complex are involved in the control of mitochondrial shape and protein biogenesis, and function in nonvesicular lipid trafficking between the ER and mitochondria. The MDM12-MMM1 subcomplex functions in the major beta-barrel assembly pathway that is responsible for biogenesis of all outer membrane beta-barrel proteins, and acts in a late step after the SAM complex. The MDM10-MDM12-MMM1 subcomplex further acts in the TOM40-specific pathway after the action of the MDM12-MMM1 complex. Essential for establishing and maintaining the structure of mitochondria and maintenance of mtDNA nucleoids. The chain is Maintenance of mitochondrial morphology protein 1 from Paracoccidioides lutzii (strain ATCC MYA-826 / Pb01) (Paracoccidioides brasiliensis).